The sequence spans 204 residues: Guanylate kinase (204 aa).

A Guanylate kinase-like domain is found at 4 to 182 (GMLVVVSGPS…AVNDLEAVLT (179 aa)). 11 to 18 (GPSGAGKG) provides a ligand contact to ATP.

The protein belongs to the guanylate kinase family.

It localises to the cytoplasm. The catalysed reaction is GMP + ATP = GDP + ADP. Essential for recycling GMP and indirectly, cGMP. This chain is Guanylate kinase, found in Carboxydothermus hydrogenoformans (strain ATCC BAA-161 / DSM 6008 / Z-2901).